A 143-amino-acid polypeptide reads, in one-letter code: Holo-[acyl-carrier-protein] synthase (143 aa).

Residues Asp-8 and Glu-62 each contribute to the Mg(2+) site.

Belongs to the P-Pant transferase superfamily. AcpS family. Mg(2+) serves as cofactor.

The protein resides in the cytoplasm. It catalyses the reaction apo-[ACP] + CoA = holo-[ACP] + adenosine 3',5'-bisphosphate + H(+). Transfers the 4'-phosphopantetheine moiety from coenzyme A to a Ser of acyl-carrier-protein. The polypeptide is Holo-[acyl-carrier-protein] synthase (Cupriavidus metallidurans (strain ATCC 43123 / DSM 2839 / NBRC 102507 / CH34) (Ralstonia metallidurans)).